Here is a 128-residue protein sequence, read N- to C-terminus: MTMLISLPTAPSVPNYQSLERPLNFTMAAAAKVRELIQEENNADLALRVYIQGGGCSGFQYGFEFDENRADDDLALETDGVVLLVDPLSLQYLLGAEVDYTESLTGAKFVIRNPNAKTTCGCGSSFSV.

Iron-sulfur cluster-binding residues include Cys56, Cys120, and Cys122.

This sequence belongs to the HesB/IscA family. Homodimer. The cofactor is iron-sulfur cluster.

Required for insertion of 4Fe-4S clusters for at least IspG. This Xylella fastidiosa (strain M23) protein is Iron-sulfur cluster insertion protein ErpA.